The sequence spans 77 residues: Immune protein Tis1 (77 aa).

Its function is as follows. Immunity protein that plays a role in preventing early activation of toxin Tas1. This chain is Immune protein Tis1 (tis1), found in Pseudomonas aeruginosa (strain UCBPP-PA14).